A 367-amino-acid chain; its full sequence is uncharacterized protein (367 aa).

The protein to M.tuberculosis Rv0502.

This is an uncharacterized protein from Mycobacterium leprae (strain TN).